The primary structure comprises 435 residues: Serine--tRNA ligase (435 aa).

233–235 (TAE) contributes to the L-serine binding site. 264–266 (RAE) serves as a coordination point for ATP. Glutamate 287 is an L-serine binding site. 351-354 (EISS) contributes to the ATP binding site. Position 386 (serine 386) interacts with L-serine.

The protein belongs to the class-II aminoacyl-tRNA synthetase family. Type-1 seryl-tRNA synthetase subfamily. In terms of assembly, homodimer. The tRNA molecule binds across the dimer.

The protein resides in the cytoplasm. It catalyses the reaction tRNA(Ser) + L-serine + ATP = L-seryl-tRNA(Ser) + AMP + diphosphate + H(+). The enzyme catalyses tRNA(Sec) + L-serine + ATP = L-seryl-tRNA(Sec) + AMP + diphosphate + H(+). The protein operates within aminoacyl-tRNA biosynthesis; selenocysteinyl-tRNA(Sec) biosynthesis; L-seryl-tRNA(Sec) from L-serine and tRNA(Sec): step 1/1. Its function is as follows. Catalyzes the attachment of serine to tRNA(Ser). Is also able to aminoacylate tRNA(Sec) with serine, to form the misacylated tRNA L-seryl-tRNA(Sec), which will be further converted into selenocysteinyl-tRNA(Sec). This Anaeromyxobacter dehalogenans (strain 2CP-C) protein is Serine--tRNA ligase.